Consider the following 177-residue polypeptide: RNA pyrophosphohydrolase (177 aa).

The Nudix hydrolase domain occupies 6-149 (GYRPNVGIVI…KRDVYRRVMK (144 aa)). Positions 38–59 (GGINPGESPEQAMYRELFEEVG) match the Nudix box motif.

The protein belongs to the Nudix hydrolase family. RppH subfamily. A divalent metal cation is required as a cofactor.

Accelerates the degradation of transcripts by removing pyrophosphate from the 5'-end of triphosphorylated RNA, leading to a more labile monophosphorylated state that can stimulate subsequent ribonuclease cleavage. The protein is RNA pyrophosphohydrolase of Pectobacterium atrosepticum (strain SCRI 1043 / ATCC BAA-672) (Erwinia carotovora subsp. atroseptica).